The chain runs to 200 residues: Pyrrolidone-carboxylate peptidase (200 aa).

Catalysis depends on residues Glu79, Cys142, and His166.

This sequence belongs to the peptidase C15 family. In terms of assembly, homotetramer.

The protein localises to the cytoplasm. The catalysed reaction is Release of an N-terminal pyroglutamyl group from a polypeptide, the second amino acid generally not being Pro.. Its function is as follows. Removes 5-oxoproline from various penultimate amino acid residues except L-proline. In Pyrococcus abyssi (strain GE5 / Orsay), this protein is Pyrrolidone-carboxylate peptidase (pcp).